The sequence spans 270 residues: 4-hydroxy-tetrahydrodipicolinate reductase (270 aa).

NAD(+)-binding positions include 11-16 (GCNGRM) and glutamate 37. Arginine 38 contributes to the NADP(+) binding site. Residues 101–103 (GTT) and 125–128 (ASNY) each bind NAD(+). Residue histidine 158 is the Proton donor/acceptor of the active site. Histidine 159 is a binding site for (S)-2,3,4,5-tetrahydrodipicolinate. Residue lysine 162 is the Proton donor of the active site. 168 to 169 (GT) is a binding site for (S)-2,3,4,5-tetrahydrodipicolinate.

Belongs to the DapB family.

It localises to the cytoplasm. It catalyses the reaction (S)-2,3,4,5-tetrahydrodipicolinate + NAD(+) + H2O = (2S,4S)-4-hydroxy-2,3,4,5-tetrahydrodipicolinate + NADH + H(+). The enzyme catalyses (S)-2,3,4,5-tetrahydrodipicolinate + NADP(+) + H2O = (2S,4S)-4-hydroxy-2,3,4,5-tetrahydrodipicolinate + NADPH + H(+). It functions in the pathway amino-acid biosynthesis; L-lysine biosynthesis via DAP pathway; (S)-tetrahydrodipicolinate from L-aspartate: step 4/4. In terms of biological role, catalyzes the conversion of 4-hydroxy-tetrahydrodipicolinate (HTPA) to tetrahydrodipicolinate. In Aeromonas salmonicida (strain A449), this protein is 4-hydroxy-tetrahydrodipicolinate reductase.